We begin with the raw amino-acid sequence, 373 residues long: Zinc finger CCCH domain-containing protein 15 homolog (373 aa).

The interval 1–27 (MPPKQAQSKKTVEKEKKKKVEDKTFGL) is disordered. Over residues 10-25 (KTVEKEKKKKVEDKTF) the composition is skewed to basic and acidic residues. C3H1-type zinc fingers lie at residues 95-123 (DPKS…HDLA) and 167-205 (KPTA…HCLP). Residues 252 to 326 (KEEKRLQKEK…ALANQINTSL (75 aa)) adopt a coiled-coil conformation. Residues 325-373 (SLFTDGGVLPSDDDDDDDDDDDDDEDGDDEEEDDDEEEGEYEEEEASDE) form a disordered region. Over residues 335–373 (SDDDDDDDDDDDDDEDGDDEEEDDDEEEGEYEEEEASDE) the composition is skewed to acidic residues.

Belongs to the ZC3H15/TMA46 family.

In Dictyostelium discoideum (Social amoeba), this protein is Zinc finger CCCH domain-containing protein 15 homolog.